The primary structure comprises 315 residues: MRLLAPAKINLALDVLGRRADGYHQVVMVMQTIALADTVTVAVNEGHGAIRLAGGTEEAPPDADNLVYRAAQLVRETAGLSCGVDIDLEKVIPVAAGLAGGSSDAAATVKALNRLFRLGWSDREMETLLARLGSDIPFLVRGGTALATGRGEIVHRLPPAPAFWVVLVKPPFGASTPKVYKALGAPALPDPLPWPQAMKPATTPPGTAAYRMIEALKTGDYGNVLEALGNDLEQVTLEWHPVLKEIKVQLTRFGCDRALMSGSGPTILGFTASEATARSVAAAMEEQWGPQRYRVLIARTLEREEADEWNVDCCR.

Lys8 is a catalytic residue. 93–103 is a binding site for ATP; it reads PVAAGLAGGSS. Asp135 is an active-site residue.

The protein belongs to the GHMP kinase family. IspE subfamily.

It carries out the reaction 4-CDP-2-C-methyl-D-erythritol + ATP = 4-CDP-2-C-methyl-D-erythritol 2-phosphate + ADP + H(+). Its pathway is isoprenoid biosynthesis; isopentenyl diphosphate biosynthesis via DXP pathway; isopentenyl diphosphate from 1-deoxy-D-xylulose 5-phosphate: step 3/6. Catalyzes the phosphorylation of the position 2 hydroxy group of 4-diphosphocytidyl-2C-methyl-D-erythritol. This chain is 4-diphosphocytidyl-2-C-methyl-D-erythritol kinase, found in Heliobacterium modesticaldum (strain ATCC 51547 / Ice1).